A 604-amino-acid polypeptide reads, in one-letter code: Sulfite reductase [NADPH] flavoprotein alpha-component (604 aa).

In terms of domain architecture, Flavodoxin-like spans 65-203 (VTILYGSQTG…AAGQWHADVL (139 aa)). FMN contacts are provided by residues 71–76 (SQTGNG), 118–121 (STHG), and 154–163 (LGDSSYEFFC). In terms of domain architecture, FAD-binding FR-type spans 236-453 (QNPYSAEVLV…VEPNKHFRLP (218 aa)). FAD is bound by residues T324, L358, 392–395 (RLYS), 410–412 (TVA), and 425–428 (GGAS). Residues 524–525 (SR), 530–534 (KIYVQ), and D566 contribute to the NADP(+) site. Y604 is an FAD binding site.

The protein belongs to the NADPH-dependent sulphite reductase flavoprotein subunit CysJ family. In the N-terminal section; belongs to the flavodoxin family. It in the C-terminal section; belongs to the flavoprotein pyridine nucleotide cytochrome reductase family. Alpha(8)-beta(8). The alpha component is a flavoprotein, the beta component is a hemoprotein. It depends on FAD as a cofactor. FMN serves as cofactor.

It catalyses the reaction hydrogen sulfide + 3 NADP(+) + 3 H2O = sulfite + 3 NADPH + 4 H(+). The protein operates within sulfur metabolism; hydrogen sulfide biosynthesis; hydrogen sulfide from sulfite (NADPH route): step 1/1. Component of the sulfite reductase complex that catalyzes the 6-electron reduction of sulfite to sulfide. This is one of several activities required for the biosynthesis of L-cysteine from sulfate. The flavoprotein component catalyzes the electron flow from NADPH -&gt; FAD -&gt; FMN to the hemoprotein component. This Shewanella sp. (strain ANA-3) protein is Sulfite reductase [NADPH] flavoprotein alpha-component.